The chain runs to 243 residues: MKFLLLCVLLGAAAAFDDDKIIGGATCAKSSVPYIVSLNSGYHFCGGSLITNQWVVSAAHCYKASIQVRLGEHNIALSEGTEQFISSSKVIRHSGYNSYTLDNDIMLIKLSSPASLNAAVNTVPLPSGCSAAGTSCLISGWGNTLSNGSNYPDLLQCLNAPILTNAQCNSAYPGEITANMICVGYMEGGKDSCQGDSGGPVVCNGQLQGVVSWGYGCAMRNYPGVYTKVCNYNAWIQNTIAAN.

The first 15 residues, 1-15, serve as a signal peptide directing secretion; that stretch reads MKFLLLCVLLGAAAA. A propeptide spans 16 to 20 (activation peptide); the sequence is FDDDK. Residues 21-241 enclose the Peptidase S1 domain; sequence IIGGATCAKS…YNAWIQNTIA (221 aa). Disulfide bonds link Cys-27–Cys-157, Cys-45–Cys-61, Cys-129–Cys-230, Cys-136–Cys-203, Cys-168–Cys-182, and Cys-193–Cys-217. The active-site Charge relay system is His-60. Ca(2+) is bound by residues Glu-72, Asn-74, and Glu-82. The active-site Charge relay system is Asp-104. Ser-197 functions as the Charge relay system in the catalytic mechanism.

The protein belongs to the peptidase S1 family. Requires Ca(2+) as cofactor.

Its subcellular location is the secreted. The protein resides in the extracellular space. The catalysed reaction is Preferential cleavage: Arg-|-Xaa, Lys-|-Xaa.. This Xenopus laevis (African clawed frog) protein is Trypsin.